A 190-amino-acid polypeptide reads, in one-letter code: Peptide methionine sulfoxide reductase MsrA (190 aa).

The active site involves C21.

It belongs to the MsrA Met sulfoxide reductase family.

The enzyme catalyses L-methionyl-[protein] + [thioredoxin]-disulfide + H2O = L-methionyl-(S)-S-oxide-[protein] + [thioredoxin]-dithiol. It catalyses the reaction [thioredoxin]-disulfide + L-methionine + H2O = L-methionine (S)-S-oxide + [thioredoxin]-dithiol. Its function is as follows. Has an important function as a repair enzyme for proteins that have been inactivated by oxidation. Catalyzes the reversible oxidation-reduction of methionine sulfoxide in proteins to methionine. This is Peptide methionine sulfoxide reductase MsrA from Polynucleobacter asymbioticus (strain DSM 18221 / CIP 109841 / QLW-P1DMWA-1) (Polynucleobacter necessarius subsp. asymbioticus).